The sequence spans 166 residues: Spiderine-1a (166 aa).

The signal sequence occupies residues 1 to 18 (MKFALVLLGVCAFYLVNA). The propeptide occupies 19-58 (TGDLETELEASELQELQEALDLIGETPLESLEAEELEEAR). The tract at residues 59–99 (KFKWGKLFSTAKKLYKKGKKLSKNKNFKKALKFGKQLAKNL) is linear cationic cytotoxin domain. One can recognise an Oxytoxin-type inhibitor cystine knot (ICK) domain in the interval 113–166 (NNKCWAIGTTCSDDCDCCPEHHCHCPAGKWLPGLFRCTCQVTESDKVNKCPPAE). Cystine bridges form between cysteine 116/cysteine 130, cysteine 123/cysteine 135, cysteine 127/cysteine 162, cysteine 129/cysteine 151, and cysteine 137/cysteine 149.

Belongs to the spiderine family. Cationic/spiderine subfamily. Expressed by the venom gland.

Its subcellular location is the secreted. In terms of biological role, has antimicrobial, insecticidal, cytolytic and cytotoxic activity. Active against E.coli DH5alpha, E.faecalis VKM B 871, B.subtilis VKM B 501, A.globiformis VKM Ac 1112, P.aeruginosa PAO1 and S.aureus 209P in submicromolar or low micromolar ranges. Lyses human erythrocytes. Kills HeLA and A549 cells. This is Spiderine-1a from Oxyopes takobius (Lynx spider).